The following is a 630-amino-acid chain: Sodium-dependent serotonin transporter (630 aa).

Residues 1 to 87 (METTPLNSQK…ERETWGKKMD (87 aa)) are Cytoplasmic-facing. Residues 23-60 (ENGVLQKGVPTTADRAEPSQISNGYSAVPSTSAGDEAS) are disordered. The span at 41 to 55 (SQISNGYSAVPSTSA) shows a compositional bias: polar residues. Phosphotyrosine is present on Tyr47. Residues 88–112 (FLLSVIGYAVDLGNIWRFPYICYQN) traverse the membrane as a helical segment. Na(+)-binding residues include Gly94, Ala96, Val97, Asp98, and Asn101. Asp98 is a serotonin binding site. Topologically, residues 113 to 115 (GGG) are extracellular. The helical transmembrane segment at 116–135 (AFLLPYTIMAIFGGIPLFYM) threads the bilayer. Topologically, residues 136-160 (ELALGQYHRNGCISIWRKICPIFKG) are cytoplasmic. At Tyr142 the chain carries Phosphotyrosine. A helical transmembrane segment spans residues 161–186 (IGYAICIIAFYIASYYNTIIAWALYY). At 187-252 (LISSLTDRLP…KGLQDLGTIS (66 aa)) the chain is on the extracellular side. Cys200 and Cys209 are joined by a disulfide. N-linked (GlcNAc...) asparagine glycans are attached at residues Asn208 and Asn217. Residues 253 to 271 (WQLTLCIVLIFTVIYFSIW) form a helical membrane-spanning segment. Topologically, residues 272 to 277 (KGVKTS) are cytoplasmic. Thr276 bears the Phosphothreonine mark. The chain crosses the membrane as a helical span at residues 278–297 (GKVVWVTATFPYIVLSVLLV). The Extracellular segment spans residues 298-324 (RGATLPGAWRGVVFYLKPNWQKLLETG). The chain crosses the membrane as a helical span at residues 325 to 347 (VWVDAAAQIFFSLGPGFGVLLAF). Ser336 contacts Na(+). Residues 348-360 (ASYNKFNNNCYQD) lie on the Cytoplasmic side of the membrane. Residues 361–380 (ALVTSVVNCMTSFVSGFVIF) form a helical membrane-spanning segment. Asn368 lines the Na(+) pocket. Residues 381–421 (TVLGYMAEMRNEDVSEVAKDAGPSLLFITYAEAIANMPAST) are Extracellular-facing. The chain crosses the membrane as a helical span at residues 422–443 (FFAIIFFLMLITLGLDSTFAGL). 3 residues coordinate Na(+): Leu434, Asp437, and Ser438. Thr439 is a serotonin binding site. Residues 444–463 (EGVITAVLDEFPHIWAKRRE) are Cytoplasmic-facing. The helical transmembrane segment at 464–483 (WFVLIVVITCVLGSLLTLTS) threads the bilayer. Residues 484-494 (GGAYVVTLLEE) are Extracellular-facing. 2 residues coordinate serotonin: Glu494 and Tyr495. The chain crosses the membrane as a helical span at residues 495–516 (YATGPAVLTVALIEAVAVSWFY). At 517-538 (GITQFCSDVKEMLGFSPGWFWR) the chain is on the cytoplasmic side. A helical membrane pass occupies residues 539 to 558 (ICWVAISPLFLLFIICSFLM). The serotonin site is built by Phe556 and Ser559. At 559–574 (SPPQLRLFQYNYPHWS) the chain is on the extracellular side. A helical transmembrane segment spans residues 575–595 (IVLGYCIGMSSVICIPTYIIY). The Cytoplasmic portion of the chain corresponds to 596-630 (RLISTPGTLKERIIKSITPETPTEIPCGDIRMNAV). An interaction with RAB4A region spans residues 616–624 (TPTEIPCGD).

It belongs to the sodium:neurotransmitter symporter (SNF) (TC 2.A.22) family. SLC6A4 subfamily. Monomer or homooligomer. Interacts with TGFB1I1. Interacts with SEC23A, SEC24C and PATJ. Interacts with NOS1; the interaction may diminish the cell surface localization of SERT in the brain and, correspondingly, reduce serotonin reuptake. Interacts (via C-terminus) with SCAMP2; the interaction is direct and retains transporter molecules intracellularly. Interacts with filamentous actin and STX1A. Interacts (via the N-terminus) with STX1A (via the H3 domain); this interaction regulates SLC4A6 channel conductance. Interacts with ITGAV:ITGB3. Interacts (via C-terminus) with ITGB3; this interaction regulates SLC6A4 trafficking. Phosphorylation at Thr-276 increases 5-HT uptake and is required for cGMP-mediated SERT regulation. In terms of tissue distribution, expressed in the intestinal crypt epithelial cells and myenteric neurons of the small intestine (at protein level). Expressed in the brain.

It is found in the cell membrane. The protein resides in the endomembrane system. It localises to the endosome membrane. Its subcellular location is the synapse. The protein localises to the cell junction. It is found in the focal adhesion. The protein resides in the cell projection. It localises to the neuron projection. The enzyme catalyses serotonin(out) + K(+)(in) + Na(+)(out) + H(+)(in) = serotonin(in) + K(+)(out) + Na(+)(in) + H(+)(out). Serotonin transporter that cotransports serotonin with one Na(+) ion in exchange for one K(+) ion and possibly one proton in an overall electroneutral transport cycle. Transports serotonin across the plasma membrane from the extracellular compartment to the cytosol thus limiting serotonin intercellular signaling. Essential for serotonin homeostasis in the central nervous system. In the developing somatosensory cortex, acts in glutamatergic neurons to control serotonin uptake and its trophic functions accounting for proper spatial organization of cortical neurons and elaboration of sensory circuits. In the mature cortex, acts primarily in brainstem raphe neurons to mediate serotonin uptake from the synaptic cleft back into the pre-synaptic terminal thus terminating serotonin signaling at the synapse. Modulates mucosal serotonin levels in the gastrointestinal tract through uptake and clearance of serotonin in enterocytes. Required for enteric neurogenesis and gastrointestinal reflexes. Regulates blood serotonin levels by ensuring rapid high affinity uptake of serotonin from plasma to platelets, where it is further stored in dense granules via vesicular monoamine transporters and then released upon stimulation. Mechanistically, the transport cycle starts with an outward-open conformation having Na1(+) and Cl(-) sites occupied. The binding of a second extracellular Na2(+) ion and serotonin substrate leads to structural changes to outward-occluded to inward-occluded to inward-open, where the Na2(+) ion and serotonin are released into the cytosol. Binding of intracellular K(+) ion induces conformational transitions to inward-occluded to outward-open and completes the cycle by releasing K(+) possibly together with a proton bound to Asp-98 into the extracellular compartment. Na1(+) and Cl(-) ions remain bound throughout the transport cycle. Additionally, displays serotonin-induced channel-like conductance for monovalent cations, mainly Na(+) ions. The channel activity is uncoupled from the transport cycle and may contribute to the membrane resting potential or excitability. This chain is Sodium-dependent serotonin transporter (Slc6a4), found in Rattus norvegicus (Rat).